The primary structure comprises 624 residues: 1-deoxy-D-xylulose-5-phosphate synthase (624 aa).

Thiamine diphosphate-binding positions include H80 and 121–123 (GHS). Mg(2+) is bound at residue D152. Residues 153-154 (GA), N181, Y288, and E370 contribute to the thiamine diphosphate site. N181 contacts Mg(2+).

Belongs to the transketolase family. DXPS subfamily. In terms of assembly, homodimer. It depends on Mg(2+) as a cofactor. Thiamine diphosphate is required as a cofactor.

The enzyme catalyses D-glyceraldehyde 3-phosphate + pyruvate + H(+) = 1-deoxy-D-xylulose 5-phosphate + CO2. It participates in metabolic intermediate biosynthesis; 1-deoxy-D-xylulose 5-phosphate biosynthesis; 1-deoxy-D-xylulose 5-phosphate from D-glyceraldehyde 3-phosphate and pyruvate: step 1/1. In terms of biological role, catalyzes the acyloin condensation reaction between C atoms 2 and 3 of pyruvate and glyceraldehyde 3-phosphate to yield 1-deoxy-D-xylulose-5-phosphate (DXP). The protein is 1-deoxy-D-xylulose-5-phosphate synthase of Proteus mirabilis (strain HI4320).